Here is a 585-residue protein sequence, read N- to C-terminus: Glycerol-3-phosphate acyltransferase 1 (585 aa).

A run of 3 helical transmembrane segments spans residues 126–146 (FFPY…AILL), 334–354 (TPLA…LAVF), and 356–376 (ISVG…MSGV). An HXXXXD motif motif is present at residues 403–408 (HRTLLD).

The protein belongs to the GPAT/DAPAT family. In terms of tissue distribution, highly expressed in developing siliques and flower buds. Weakly or not expressed in roots, seedlings and leaves.

The protein localises to the membrane. Its subcellular location is the mitochondrion. The catalysed reaction is sn-glycerol 3-phosphate + an acyl-CoA = a 1-acyl-sn-glycero-3-phosphate + CoA. Its pathway is phospholipid metabolism; CDP-diacylglycerol biosynthesis; CDP-diacylglycerol from sn-glycerol 3-phosphate: step 1/3. In terms of biological role, esterifies acyl-group from acyl-ACP to the sn-1 position of glycerol-3-phosphate, an essential step in glycerolipid biosynthesis. Involved in pollen development, by being required for tapetum differentiation and male fertility. In addition to the sporophytic effect, it also exerts a gametophytic effect on pollen performance. The sequence is that of Glycerol-3-phosphate acyltransferase 1 (GPAT1) from Arabidopsis thaliana (Mouse-ear cress).